The chain runs to 424 residues: MPHTLAEKLLISHSEVDDASPGDIIMVRCDLVMANDVSGPVAFRQMERMGVQRVFDPSKVVMVSDHFMPAKDARSAALQKRLKSWSDLQGVYYYGQGRGGIEHTVLVEDGWIVPGMVIAGGDSHTCTYGALGAFGTGLGSTDIAACLAFGEFWQQVPGTIQVEFTGHKGSFVAGKDLILAVIADIGVGGGANAVLEFVGEGAASLSLDDRLAVANMAVEAGAETGIFPADEVTARYLDRRADREWHPERSDPDASYVRKVKIDLNSLEPLVALPHSPGNVVAVSEARGTKIDQVYIGNCSNGTITDLRQTAEILRGNRVHPDVRAIIVPASQKVYRQAISEGLIDVFVEAGAVVSTPTCGACFGGHMGVLAEGERAITTTNRNFKGRMGSPLAEVCLANAYVAAAAAVAGEIVEPASICSEPVR.

[4Fe-4S] cluster-binding residues include Cys-299, Cys-359, and Cys-362.

It belongs to the aconitase/IPM isomerase family. LeuC type 2 subfamily. As to quaternary structure, heterodimer of LeuC and LeuD. [4Fe-4S] cluster serves as cofactor.

The enzyme catalyses (2R,3S)-3-isopropylmalate = (2S)-2-isopropylmalate. It participates in amino-acid biosynthesis; L-leucine biosynthesis; L-leucine from 3-methyl-2-oxobutanoate: step 2/4. Catalyzes the isomerization between 2-isopropylmalate and 3-isopropylmalate, via the formation of 2-isopropylmaleate. The protein is 3-isopropylmalate dehydratase large subunit 2 of Rubrobacter xylanophilus (strain DSM 9941 / JCM 11954 / NBRC 16129 / PRD-1).